Reading from the N-terminus, the 366-residue chain is Ribosomal RNA large subunit methyltransferase M (366 aa).

Residues Ser188, 221–224, Asp240, Asp260, and Asp277 each bind S-adenosyl-L-methionine; that span reads CPGG. Lys306 functions as the Proton acceptor in the catalytic mechanism.

The protein belongs to the class I-like SAM-binding methyltransferase superfamily. RNA methyltransferase RlmE family. RlmM subfamily. As to quaternary structure, monomer.

The protein resides in the cytoplasm. It carries out the reaction cytidine(2498) in 23S rRNA + S-adenosyl-L-methionine = 2'-O-methylcytidine(2498) in 23S rRNA + S-adenosyl-L-homocysteine + H(+). Its function is as follows. Catalyzes the 2'-O-methylation at nucleotide C2498 in 23S rRNA. This is Ribosomal RNA large subunit methyltransferase M from Escherichia fergusonii (strain ATCC 35469 / DSM 13698 / CCUG 18766 / IAM 14443 / JCM 21226 / LMG 7866 / NBRC 102419 / NCTC 12128 / CDC 0568-73).